The following is a 499-amino-acid chain: Probable dipeptidase B (499 aa).

The active site involves Cys-26.

The protein belongs to the peptidase C69 family.

It catalyses the reaction an L-aminoacyl-L-amino acid + H2O = 2 an L-alpha-amino acid. This Streptococcus pyogenes serotype M6 (strain ATCC BAA-946 / MGAS10394) protein is Probable dipeptidase B (pepDB).